Here is a 356-residue protein sequence, read N- to C-terminus: UDP-N-acetylglucosamine--N-acetylmuramyl-(pentapeptide) pyrophosphoryl-undecaprenol N-acetylglucosamine transferase (356 aa).

UDP-N-acetyl-alpha-D-glucosamine-binding positions include 10–12 (TAG), asparagine 123, arginine 159, serine 193, isoleucine 240, and glutamine 284.

It belongs to the glycosyltransferase 28 family. MurG subfamily.

It localises to the cell membrane. The enzyme catalyses di-trans,octa-cis-undecaprenyl diphospho-N-acetyl-alpha-D-muramoyl-L-alanyl-D-glutamyl-meso-2,6-diaminopimeloyl-D-alanyl-D-alanine + UDP-N-acetyl-alpha-D-glucosamine = di-trans,octa-cis-undecaprenyl diphospho-[N-acetyl-alpha-D-glucosaminyl-(1-&gt;4)]-N-acetyl-alpha-D-muramoyl-L-alanyl-D-glutamyl-meso-2,6-diaminopimeloyl-D-alanyl-D-alanine + UDP + H(+). It functions in the pathway cell wall biogenesis; peptidoglycan biosynthesis. In terms of biological role, cell wall formation. Catalyzes the transfer of a GlcNAc subunit on undecaprenyl-pyrophosphoryl-MurNAc-pentapeptide (lipid intermediate I) to form undecaprenyl-pyrophosphoryl-MurNAc-(pentapeptide)GlcNAc (lipid intermediate II). In Corynebacterium glutamicum (strain R), this protein is UDP-N-acetylglucosamine--N-acetylmuramyl-(pentapeptide) pyrophosphoryl-undecaprenol N-acetylglucosamine transferase.